Consider the following 362-residue polypeptide: 3-dehydroquinate synthase (362 aa).

Residues 71–76 (DGEQYK), 105–109 (GVIGD), 129–130 (TT), K142, K151, and 169–172 (CLKT) contribute to the NAD(+) site. Positions 184, 247, and 264 each coordinate Zn(2+).

This sequence belongs to the sugar phosphate cyclases superfamily. Dehydroquinate synthase family. Requires Co(2+) as cofactor. It depends on Zn(2+) as a cofactor. The cofactor is NAD(+).

The protein localises to the cytoplasm. The enzyme catalyses 7-phospho-2-dehydro-3-deoxy-D-arabino-heptonate = 3-dehydroquinate + phosphate. Its pathway is metabolic intermediate biosynthesis; chorismate biosynthesis; chorismate from D-erythrose 4-phosphate and phosphoenolpyruvate: step 2/7. Catalyzes the conversion of 3-deoxy-D-arabino-heptulosonate 7-phosphate (DAHP) to dehydroquinate (DHQ). The protein is 3-dehydroquinate synthase of Salmonella agona (strain SL483).